The sequence spans 74 residues: MEVQVLEAGKIISPNEKVIVWRIGDYFLIKKIEGKKTLERIGEIRKKLEDRDMLLSEEEVVKTVKEVREEWKRL.

This is an uncharacterized protein from Archaeoglobus fulgidus (strain ATCC 49558 / DSM 4304 / JCM 9628 / NBRC 100126 / VC-16).